A 129-amino-acid polypeptide reads, in one-letter code: Small ribosomal subunit protein uS11 (129 aa).

It belongs to the universal ribosomal protein uS11 family. Part of the 30S ribosomal subunit. Interacts with proteins S7 and S18. Binds to IF-3.

Functionally, located on the platform of the 30S subunit, it bridges several disparate RNA helices of the 16S rRNA. Forms part of the Shine-Dalgarno cleft in the 70S ribosome. The protein is Small ribosomal subunit protein uS11 of Vibrio campbellii (strain ATCC BAA-1116).